A 430-amino-acid polypeptide reads, in one-letter code: Aspartate--tRNA(Asp/Asn) ligase (430 aa).

Position 168 (glutamate 168) interacts with L-aspartate. Residues 190-193 are aspartate; the sequence is QLYK. Arginine 212 lines the L-aspartate pocket. ATP-binding positions include 212–214, 220–222, and glutamate 353; these read RAE and RHL. Mg(2+)-binding residues include glutamate 353 and serine 356. L-aspartate contacts are provided by serine 356 and arginine 360. 401–404 lines the ATP pocket; it reads GAER.

The protein belongs to the class-II aminoacyl-tRNA synthetase family. Type 2 subfamily. Homodimer. Mg(2+) serves as cofactor.

It localises to the cytoplasm. The catalysed reaction is tRNA(Asx) + L-aspartate + ATP = L-aspartyl-tRNA(Asx) + AMP + diphosphate. Functionally, aspartyl-tRNA synthetase with relaxed tRNA specificity since it is able to aspartylate not only its cognate tRNA(Asp) but also tRNA(Asn). Reaction proceeds in two steps: L-aspartate is first activated by ATP to form Asp-AMP and then transferred to the acceptor end of tRNA(Asp/Asn). The sequence is that of Aspartate--tRNA(Asp/Asn) ligase from Archaeoglobus fulgidus (strain ATCC 49558 / DSM 4304 / JCM 9628 / NBRC 100126 / VC-16).